The primary structure comprises 731 residues: Autophagy-related protein 20 (731 aa).

A compositionally biased stretch (polar residues) spans 1–22 (MSSVLRNQDNPPTISEVSSTTK). Positions 1–130 (MSSVLRNQDN…NNKSNNVSRV (130 aa)) are disordered. Over residues 31-41 (KQEEKEKEKEI) the composition is skewed to basic and acidic residues. Polar residues predominate over residues 69–82 (SFMTANSFNEGPNT). Composition is skewed to low complexity over residues 92 to 102 (NNNSSSNNNRG) and 113 to 128 (LLLY…NNVS). In terms of domain architecture, PX spans 164-340 (IQITEAGNSN…KFLDPNANWG (177 aa)). Arg205, Ser207, and Lys231 together coordinate a 1,2-diacyl-sn-glycero-3-phospho-(1D-myo-inositol-3-phosphate). Residues 253–277 (SVAGSNGNSGGSGGGGASGGAGSGS) are disordered. The segment covering 259–277 (GNSGGSGGGGASGGAGSGS) has biased composition (gly residues). Arg306 contacts a 1,2-diacyl-sn-glycero-3-phospho-(1D-myo-inositol-3-phosphate). The segment at 586–626 (NSQVKPKNGKYNLEQQQSSTVSPAPPPGPPPSSSSSSSSSS) is disordered. Residues 608-617 (PAPPPGPPPS) are compositionally biased toward pro residues.

Belongs to the sorting nexin family.

It is found in the endosome membrane. The protein localises to the preautophagosomal structure membrane. Functionally, required for cytoplasm to vacuole transport (Cvt), pexophagy and mitophagy. Also involved in endoplasmic reticulum-specific autophagic process and is essential for the survival of cells subjected to severe ER stress. Functions in protein retrieval from the endocytic pathway. This Candida albicans (strain SC5314 / ATCC MYA-2876) (Yeast) protein is Autophagy-related protein 20 (ATG20).